Reading from the N-terminus, the 199-residue chain is Peroxiredoxin-1 (199 aa).

Ser2 bears the N-acetylserine mark. Residues 6-165 form the Thioredoxin domain; that stretch reads AKIGYPAPNF…ILRLVQAFQF (160 aa). An N6-acetyllysine; alternate modification is found at Lys7. Lys7 is covalently cross-linked (Glycyl lysine isopeptide (Lys-Gly) (interchain with G-Cter in SUMO2); alternate). Lys16 is subject to N6-acetyllysine. Ser32 bears the Phosphoserine mark. Residue Cys52 is the Cysteine sulfenic acid (-SOH) intermediate of the active site. Phosphothreonine is present on Thr90. Lys120 participates in a covalent cross-link: Glycyl lysine isopeptide (Lys-Gly) (interchain with G-Cter in SUMO2). Lys136 is subject to N6-acetyllysine. Residues 176–199 form a disordered region; the sequence is GWKPGSDTIKPDVQKSKEYFSKQK. Residues 184–199 are compositionally biased toward basic and acidic residues; it reads IKPDVQKSKEYFSKQK. Lys185 participates in a covalent cross-link: Glycyl lysine isopeptide (Lys-Gly) (interchain with G-Cter in SUMO1). At Lys197 the chain carries N6-acetyllysine.

It belongs to the peroxiredoxin family. AhpC/Prx1 subfamily. Homodimer; disulfide-linked, upon oxidation. 5 homodimers assemble to form a ring-like decamer. Interacts with GDPD5; forms a mixed-disulfide with GDPD5. Interacts with SESN1 and SESN2. Interacts with FAM107A. In terms of processing, phosphorylated on Thr-90 during the M-phase, which leads to a decrease in enzymatic activity. Acetylation increases reducing activity and resistance to superoxidation. Deacetylated by HDAC6 which decreases reducing activity.

Its subcellular location is the cytoplasm. It catalyses the reaction a hydroperoxide + [thioredoxin]-dithiol = an alcohol + [thioredoxin]-disulfide + H2O. Thiol-specific peroxidase that catalyzes the reduction of hydrogen peroxide and organic hydroperoxides to water and alcohols, respectively. Plays a role in cell protection against oxidative stress by detoxifying peroxides and as sensor of hydrogen peroxide-mediated signaling events. Might participate in the signaling cascades of growth factors and tumor necrosis factor-alpha by regulating the intracellular concentrations of H(2)O(2). Reduces an intramolecular disulfide bond in GDPD5 that gates the ability to GDPD5 to drive postmitotic motor neuron differentiation. This chain is Peroxiredoxin-1 (PRDX1), found in Cricetulus griseus (Chinese hamster).